Here is an 825-residue protein sequence, read N- to C-terminus: Arabinolytic transcriptional activator araR (825 aa).

A compositionally biased stretch (polar residues) spans Met-1–Asp-17. The segment at Met-1–Trp-28 is disordered. A DNA-binding region (zn(2)-C6 fungal-type) is located at residues Cys-35–Cys-61. Positions Ser-117–Pro-152 are disordered.

Belongs to the xlnR/xlr1 family. araR subfamily.

The protein resides in the nucleus. In terms of biological role, transcriptional activator of the arabinanolytic system. Involved in the regulation of extracellular arabinanolytic genes and in the regulation of the intracellular activities of L-arabinose catabolic genes in the pentose catabolic pathway (PCP) in response to the presence of L-arabinose. In Emericella nidulans (strain FGSC A4 / ATCC 38163 / CBS 112.46 / NRRL 194 / M139) (Aspergillus nidulans), this protein is Arabinolytic transcriptional activator araR.